Consider the following 134-residue polypeptide: kinetoplast-associated protein 3 (134 aa).

Residues Met1 to Arg10 constitute a propeptide that is removed on maturation. A compositionally biased stretch (low complexity) spans Pro106–Lys124. Positions Pro106 to Lys134 are disordered. A compositionally biased stretch (basic residues) spans Thr125 to Lys134.

Belongs to the KAP family. Associates with the kinetoplast DNA network.

The protein resides in the mitochondrion matrix. It is found in the kinetoplast. Its function is as follows. Histone H1-like DNA-binding protein involved in the organization and segregation of kinetoplast DNA (kDNA). The mitochondrial DNA of kinetoplastid protozoa consists of about 5,000 minicircles and 20 to 30 maxicircles. These circular DNAs are held together by catenation into a highly organized compact disk structure referred to as a kinetoplast DNA (kDNA) network. Binds preferentially to a specific fragment of minicircle DNA and is able to compact kDNA networks through DNA charge neutralization and condensation. This Crithidia fasciculata protein is kinetoplast-associated protein 3 (KAP3).